We begin with the raw amino-acid sequence, 365 residues long: tRNA-specific 2-thiouridylase MnmA (365 aa).

ATP contacts are provided by residues 14 to 21 (AMSGGVDS) and Leu-40. Residue Cys-108 is the Nucleophile of the active site. The cysteines at positions 108 and 204 are disulfide-linked. Gly-132 lines the ATP pocket. Residues 154–156 (KDQ) are interaction with tRNA. Catalysis depends on Cys-204, which acts as the Cysteine persulfide intermediate.

This sequence belongs to the MnmA/TRMU family.

The protein localises to the cytoplasm. It carries out the reaction S-sulfanyl-L-cysteinyl-[protein] + uridine(34) in tRNA + AH2 + ATP = 2-thiouridine(34) in tRNA + L-cysteinyl-[protein] + A + AMP + diphosphate + H(+). Catalyzes the 2-thiolation of uridine at the wobble position (U34) of tRNA, leading to the formation of s(2)U34. The protein is tRNA-specific 2-thiouridylase MnmA of Rickettsia rickettsii (strain Iowa).